The following is a 185-amino-acid chain: Methanol dehydrogenase activator (185 aa).

The protein belongs to the Nudix hydrolase family. As to quaternary structure, homodimer. Requires Mg(2+) as cofactor.

Functionally, involved in the activation of the NAD-dependent methanol dehydrogenase (MDH). MDH activation by Act involves hydrolytic removal of the nicotinamide mononucleotide (NMN) moiety of the NAD cofactor, changing its ping-pong type of reaction mechanism into a ternary complex reaction mechanism. It requires the presence of magnesium ions and is also able to use ADP-ribose. This Bacillus methanolicus protein is Methanol dehydrogenase activator.